We begin with the raw amino-acid sequence, 580 residues long: Laccase-20 (580 aa).

Residues 1 to 23 (MVASLLCTVAVAVLAVAAVGGEA) form the signal peptide. 2 Plastocyanin-like domains span residues 31 to 147 (VVHE…PRDG) and 156 to 310 (KDVP…YTGV). N-linked (GlcNAc...) asparagine glycans are attached at residues Asn-36 and Asn-42. The Cu cation site is built by His-81 and His-83. A glycan (N-linked (GlcNAc...) asparagine) is linked at Asn-115. Residues His-126 and His-128 each contribute to the Cu cation site. N-linked (GlcNAc...) asparagine glycosylation is found at Asn-200, Asn-339, Asn-373, Asn-392, Asn-399, Asn-429, and Asn-460. In terms of domain architecture, Plastocyanin-like 3 spans 419–561 (DFPVRPPRPY…ATAFIVEDGP (143 aa)). Cu cation-binding residues include Asn-478, His-481, His-483, His-540, Cys-541, His-542, His-546, and Met-551. The tract at residues 560–580 (GPTPETSLPPPPPEFKRCDAS) is disordered.

It belongs to the multicopper oxidase family. Cu cation serves as cofactor.

It is found in the secreted. The protein resides in the extracellular space. Its subcellular location is the apoplast. The catalysed reaction is 4 hydroquinone + O2 = 4 benzosemiquinone + 2 H2O. In terms of biological role, lignin degradation and detoxification of lignin-derived products. The polypeptide is Laccase-20 (LAC20) (Oryza sativa subsp. japonica (Rice)).